A 278-amino-acid polypeptide reads, in one-letter code: Putative ABC transporter ATP-binding protein MTBMA_c05830 (278 aa).

The region spanning 4 to 239 (IEAVNIRYTY…IDTIRGADLR (236 aa)) is the ABC transporter domain. 37 to 44 (GPNGAGKS) serves as a coordination point for ATP.

Belongs to the ABC transporter superfamily.

The protein resides in the cell membrane. Functionally, probably part of an ABC transporter complex. Responsible for energy coupling to the transport system. The protein is Putative ABC transporter ATP-binding protein MTBMA_c05830 of Methanothermobacter marburgensis (strain ATCC BAA-927 / DSM 2133 / JCM 14651 / NBRC 100331 / OCM 82 / Marburg) (Methanobacterium thermoautotrophicum).